The chain runs to 139 residues: Acidic phospholipase A2 S1E6-c (139 aa).

The signal sequence occupies residues 1–16; that stretch reads MRTLWILAVLLVGVEG. Cystine bridges form between Cys42–Cys132, Cys44–Cys60, Cys59–Cys111, Cys65–Cys139, Cys66–Cys104, Cys73–Cys97, and Cys91–Cys102. Residues Tyr43, Gly45, and Gly47 each contribute to the Ca(2+) site. His63 is an active-site residue. Asp64 contacts Ca(2+). Asp105 is an active-site residue.

The protein belongs to the phospholipase A2 family. Group II subfamily. D49 sub-subfamily. In terms of assembly, homodimer. It depends on Ca(2+) as a cofactor. Expressed by the venom gland.

The protein localises to the secreted. It catalyses the reaction a 1,2-diacyl-sn-glycero-3-phosphocholine + H2O = a 1-acyl-sn-glycero-3-phosphocholine + a fatty acid + H(+). Snake venom phospholipase A2 (PLA2) that inhibits ADP-induced platelet aggregation. PLA2 catalyzes the calcium-dependent hydrolysis of the 2-acyl groups in 3-sn-phosphoglycerides. The polypeptide is Acidic phospholipase A2 S1E6-c (Calloselasma rhodostoma (Malayan pit viper)).